The following is a 362-amino-acid chain: Prostaglandin E2 receptor EP2 subtype (362 aa).

The Extracellular segment spans residues Met1–Glu24. N-linked (GlcNAc...) asparagine glycosylation is present at Asn6. Residues Ser25 to Ala48 traverse the membrane as a helical segment. The Cytoplasmic portion of the chain corresponds to Arg49–Ser66. The helical transmembrane segment at Leu67 to Ala92 threads the bilayer. The Extracellular segment spans residues Ser93 to Tyr112. Cys110 and Cys188 form a disulfide bridge. Residues Phe113 to Leu133 traverse the membrane as a helical segment. Topologically, residues Glu134–Arg152 are cytoplasmic. The helical transmembrane segment at Gly153–Gly177 threads the bilayer. The Extracellular segment spans residues Glu178–Gln199. The chain crosses the membrane as a helical span at residues Leu200 to Ile224. The Cytoplasmic portion of the chain corresponds to Arg225–His262. The segment at Arg234–Ser255 is disordered. The segment covering Cys235 to Pro245 has biased composition (low complexity). A helical membrane pass occupies residues Leu263–Met286. Topologically, residues Asp287–Arg299 are extracellular. Residues Ala300 to Leu323 traverse the membrane as a helical segment. At Arg324–Leu362 the chain is on the cytoplasmic side.

Belongs to the G-protein coupled receptor 1 family.

The protein localises to the cell membrane. In terms of biological role, receptor for prostaglandin E2 (PGE2). The activity of this receptor is mediated by G(s) proteins that stimulate adenylate cyclase. The subsequent raise in intracellular cAMP is responsible for the relaxing effect of this receptor on smooth muscle. The chain is Prostaglandin E2 receptor EP2 subtype (Ptger2) from Mus musculus (Mouse).